The chain runs to 560 residues: Membrane protein insertase YidC (560 aa).

Transmembrane regions (helical) follow at residues 5-25 (IINLVAAIILSLSIIFGWQYF), 334-354 (AIDFGWFYIITKPVFYAMNFF), 357-377 (YVGNFGVSILIVTVIIKLLMF), 431-451 (LPILVQIPVFFSIYKVLYVTI), 476-496 (LFGLLPFSPPSFLMIGAWPIL), and 522-542 (FMPLIFLFMFSSFPVGLLIYW).

It belongs to the OXA1/ALB3/YidC family. Type 1 subfamily. Interacts with the Sec translocase complex via SecD. Specifically interacts with transmembrane segments of nascent integral membrane proteins during membrane integration.

It localises to the cell inner membrane. Its function is as follows. Required for the insertion and/or proper folding and/or complex formation of integral membrane proteins into the membrane. Involved in integration of membrane proteins that insert both dependently and independently of the Sec translocase complex, as well as at least some lipoproteins. Aids folding of multispanning membrane proteins. This chain is Membrane protein insertase YidC, found in Rickettsia massiliae (strain Mtu5).